Consider the following 281-residue polypeptide: Proline iminopeptidase PfmaB (281 aa).

The region spanning 23 to 267 is the AB hydrolase-1 domain; the sequence is PLVITLHGGR…NANHSVHVEK (245 aa).

This sequence belongs to the peptidase S33 family.

It carries out the reaction Release of N-terminal proline from a peptide.. Its function is as follows. Proline iminopeptidase; part of the gene cluster that mediates the biosynthesis of dihydroxynaphthalene (DHN)-melanin, a bluish-green pigment forming a dark layer in the conidial wall that protects the conidia from UV radiations. The first step of the pathway is the production of the pentaketide 1,3,6,8-tetrahydroxynaphthalene (1,3,6,8-THN or T4HN) by the polyketide synthase PfmaE though condensation of acetyl-CoA with malonyl-CoA. T4HN is not stable and easily oxidizes into the stable form flaviolin. T4HN is also substrate of the hydroxynaphthalene reductase PfmaG to yield scytalone. The scytalone dehydratase PfmaJ then reduces scytalone to 1,3,8-THN. 1,3,8-THN is then substrate of the hydroxynaphthalene reductase PfmaI to yield vermelone. Vermelone is further converted by the multicopper oxidase PfmaD to 1,8-DHN. Finally the laccase PFICI_06862 transforms 1,8-DHN to DHN-melanin. The roles of the 5-oxoprolinase PfmaA and the proline iminopeptidase PfmaB within the cluster have not been elucidated yet. The chain is Proline iminopeptidase PfmaB from Pestalotiopsis fici (strain W106-1 / CGMCC3.15140).